A 217-amino-acid polypeptide reads, in one-letter code: Thiamine-phosphate synthase (217 aa).

4-amino-2-methyl-5-(diphosphooxymethyl)pyrimidine is bound by residues 39 to 43 (QLRRK) and N71. Residues D72 and D91 each coordinate Mg(2+). A 4-amino-2-methyl-5-(diphosphooxymethyl)pyrimidine-binding site is contributed by S110. 137–139 (SPT) is a binding site for 2-[(2R,5Z)-2-carboxy-4-methylthiazol-5(2H)-ylidene]ethyl phosphate. Residue K140 participates in 4-amino-2-methyl-5-(diphosphooxymethyl)pyrimidine binding. 2-[(2R,5Z)-2-carboxy-4-methylthiazol-5(2H)-ylidene]ethyl phosphate contacts are provided by residues G173 and 193–194 (IS).

It belongs to the thiamine-phosphate synthase family. It depends on Mg(2+) as a cofactor.

The enzyme catalyses 2-[(2R,5Z)-2-carboxy-4-methylthiazol-5(2H)-ylidene]ethyl phosphate + 4-amino-2-methyl-5-(diphosphooxymethyl)pyrimidine + 2 H(+) = thiamine phosphate + CO2 + diphosphate. It catalyses the reaction 2-(2-carboxy-4-methylthiazol-5-yl)ethyl phosphate + 4-amino-2-methyl-5-(diphosphooxymethyl)pyrimidine + 2 H(+) = thiamine phosphate + CO2 + diphosphate. It carries out the reaction 4-methyl-5-(2-phosphooxyethyl)-thiazole + 4-amino-2-methyl-5-(diphosphooxymethyl)pyrimidine + H(+) = thiamine phosphate + diphosphate. Its pathway is cofactor biosynthesis; thiamine diphosphate biosynthesis; thiamine phosphate from 4-amino-2-methyl-5-diphosphomethylpyrimidine and 4-methyl-5-(2-phosphoethyl)-thiazole: step 1/1. Its function is as follows. Condenses 4-methyl-5-(beta-hydroxyethyl)thiazole monophosphate (THZ-P) and 2-methyl-4-amino-5-hydroxymethyl pyrimidine pyrophosphate (HMP-PP) to form thiamine monophosphate (TMP). The polypeptide is Thiamine-phosphate synthase (Bordetella parapertussis (strain 12822 / ATCC BAA-587 / NCTC 13253)).